We begin with the raw amino-acid sequence, 565 residues long: Formate--tetrahydrofolate ligase (565 aa).

Residue 65-72 participates in ATP binding; that stretch reads TPAGEGKT.

The protein belongs to the formate--tetrahydrofolate ligase family.

It carries out the reaction (6S)-5,6,7,8-tetrahydrofolate + formate + ATP = (6R)-10-formyltetrahydrofolate + ADP + phosphate. Its pathway is one-carbon metabolism; tetrahydrofolate interconversion. This is Formate--tetrahydrofolate ligase from Syntrophus aciditrophicus (strain SB).